We begin with the raw amino-acid sequence, 299 residues long: uncharacterized protein (299 aa).

This is an uncharacterized protein from Mycobacterium tuberculosis (strain ATCC 25618 / H37Rv).